A 206-amino-acid chain; its full sequence is Small ribosomal subunit protein uS4 (206 aa).

Residues 96–158 (SRLDNVVYRM…AKKQLRIQNA (63 aa)) enclose the S4 RNA-binding domain.

Belongs to the universal ribosomal protein uS4 family. Part of the 30S ribosomal subunit. Contacts protein S5. The interaction surface between S4 and S5 is involved in control of translational fidelity.

Functionally, one of the primary rRNA binding proteins, it binds directly to 16S rRNA where it nucleates assembly of the body of the 30S subunit. In terms of biological role, with S5 and S12 plays an important role in translational accuracy. In Francisella tularensis subsp. mediasiatica (strain FSC147), this protein is Small ribosomal subunit protein uS4.